We begin with the raw amino-acid sequence, 96 residues long: Acylphosphatase (96 aa).

One can recognise an Acylphosphatase-like domain in the interval 4-91; the sequence is RVHVYVKGKV…GEFDDFRILY (88 aa). Active-site residues include arginine 19 and asparagine 37.

The protein belongs to the acylphosphatase family.

It catalyses the reaction an acyl phosphate + H2O = a carboxylate + phosphate + H(+). This chain is Acylphosphatase (acyP), found in Syntrophus aciditrophicus (strain SB).